Here is a 177-residue protein sequence, read N- to C-terminus: Putative adenylate kinase (177 aa).

Gly10, Gly12, Lys13, Thr14, and Thr15 together coordinate ATP. The interval 30–50 (SLRDYAIEKGIGEMKGDELEV) is NMP. Residues 99 to 109 (ERGYSREKVGE) form an LID region. ATP contacts are provided by Arg100 and Lys138.

Belongs to the adenylate kinase family. AK6 subfamily. As to quaternary structure, interacts with uS11. Not a structural component of 40S pre-ribosomes, but transiently interacts with them by binding to uS11.

It catalyses the reaction AMP + ATP = 2 ADP. The enzyme catalyses ATP + H2O = ADP + phosphate + H(+). In terms of biological role, broad-specificity nucleoside monophosphate (NMP) kinase that catalyzes the reversible transfer of the terminal phosphate group between nucleoside triphosphates and monophosphates. Also has ATPase activity. Involved in the late maturation steps of the 30S ribosomal particles, specifically 16S rRNA maturation. While NMP activity is not required for ribosome maturation, ATPase activity is. Associates transiently with small ribosomal subunit protein uS11. ATP hydrolysis breaks the interaction with uS11. May temporarily remove uS11 from the ribosome to enable a conformational change of the ribosomal RNA that is needed for the final maturation step of the small ribosomal subunit. The sequence is that of Putative adenylate kinase from Thermococcus gammatolerans (strain DSM 15229 / JCM 11827 / EJ3).